The primary structure comprises 255 residues: tRNA pseudouridine synthase A (255 aa).

The active-site Nucleophile is the aspartate 43. Tyrosine 94 serves as a coordination point for substrate.

The protein belongs to the tRNA pseudouridine synthase TruA family.

It catalyses the reaction uridine(38/39/40) in tRNA = pseudouridine(38/39/40) in tRNA. In terms of biological role, formation of pseudouridine at positions 38, 39 and 40 in the anticodon stem and loop of transfer RNAs. This Pyrobaculum islandicum (strain DSM 4184 / JCM 9189 / GEO3) protein is tRNA pseudouridine synthase A.